The sequence spans 199 residues: Recombination protein RecR (199 aa).

A C4-type zinc finger spans residues 57–72 (CSICGNFTDRDPCRLC). Residues 80–175 (SCICVVEEAR…KVTRLAYGLP (96 aa)) form the Toprim domain.

It belongs to the RecR family.

Its function is as follows. May play a role in DNA repair. It seems to be involved in an RecBC-independent recombinational process of DNA repair. It may act with RecF and RecO. The polypeptide is Recombination protein RecR (Moorella thermoacetica (strain ATCC 39073 / JCM 9320)).